The following is a 749-amino-acid chain: Transcription factor RFX3 (749 aa).

Positions 183-258 form a DNA-binding region, RFX-type winged-helix; that stretch reads HLQWLLDNYE…YHYYGIRVKP (76 aa). A disordered region spans residues 663–699; it reads VSPGNLDKDEGSEVESEMDEELDDSSEPQAKREKTEL. Over residues 674–688 the composition is skewed to acidic residues; it reads SEVESEMDEELDDSS.

It belongs to the RFX family. In terms of assembly, heterodimer; heterodimerizes with RFX1 and RFX2, and RFX6.

It is found in the nucleus. In terms of biological role, transcription factor required for ciliogenesis and islet cell differentiation during endocrine pancreas development. Essential for the differentiation of nodal monocilia and left-right asymmetry specification during embryogenesis. Required for the biogenesis of motile cilia by governing growth and beating efficiency of motile cells. Also required for ciliated ependymal cell differentiation. Regulates the expression of genes involved in ciliary assembly (DYNC2LI1, FOXJ1 and BBS4) and genes involved in ciliary motility (DNAH11, DNAH9 and DNAH5). Together with RFX6, participates in the differentiation of 4 of the 5 islet cell types during endocrine pancreas development, with the exception of pancreatic PP (polypeptide-producing) cells. Regulates transcription by forming a heterodimer with another RFX protein and binding to the X-box in the promoter of target genes. Represses transcription of MAP1A in non-neuronal cells but not in neuronal cells. This is Transcription factor RFX3 (RFX3) from Homo sapiens (Human).